Consider the following 147-residue polypeptide: Large ribosomal subunit protein uL13 (147 aa).

The protein belongs to the universal ribosomal protein uL13 family. In terms of assembly, part of the 50S ribosomal subunit.

This protein is one of the early assembly proteins of the 50S ribosomal subunit, although it is not seen to bind rRNA by itself. It is important during the early stages of 50S assembly. The chain is Large ribosomal subunit protein uL13 from Mycobacterium leprae (strain Br4923).